A 262-amino-acid chain; its full sequence is uncharacterized protein (262 aa).

H7, H9, E96, H132, H156, and D211 together coordinate a divalent metal cation.

This sequence belongs to the metallo-dependent hydrolases superfamily. TatD-type hydrolase family. A divalent metal cation serves as cofactor.

This is an uncharacterized protein from Mycoplasma genitalium (strain ATCC 33530 / DSM 19775 / NCTC 10195 / G37) (Mycoplasmoides genitalium).